Consider the following 305-residue polypeptide: Phosphoribosylaminoimidazole-succinocarboxamide synthase (305 aa).

Belongs to the SAICAR synthetase family.

The catalysed reaction is 5-amino-1-(5-phospho-D-ribosyl)imidazole-4-carboxylate + L-aspartate + ATP = (2S)-2-[5-amino-1-(5-phospho-beta-D-ribosyl)imidazole-4-carboxamido]succinate + ADP + phosphate + 2 H(+). The protein operates within purine metabolism; IMP biosynthesis via de novo pathway; 5-amino-1-(5-phospho-D-ribosyl)imidazole-4-carboxamide from 5-amino-1-(5-phospho-D-ribosyl)imidazole-4-carboxylate: step 1/2. The chain is Phosphoribosylaminoimidazole-succinocarboxamide synthase from Polaromonas naphthalenivorans (strain CJ2).